We begin with the raw amino-acid sequence, 301 residues long: MRIAVLSQGPELYSTRRLVEAAKERGHEVRVINPLECYMNINMRASSIHIAGEELPIFDAVIPRIGSAITFYGCAVLRQFEMMGVYTLNESVAVTRSRDKLRSMQLMSRRGIGLPITGFANKPSDIPDLIEMVGGAPLVIKLLEGTQGIGVVLAETRKAAESVIEAFMGLKANIMVQEYIREANGADIRCFVLGDKVVAAMKRQAAPGEFRSNLHRGGSATLVKLTPEERSVAVRAAKTMGLNVAGVDLLRSNHGPLVMEVNSSPGLEGIEGATGKDVAGAIIAFIEKAAHKKPKQTGARG.

Residues 104 to 287 enclose the ATP-grasp domain; it reads MQLMSRRGIG…VAGAIIAFIE (184 aa). ATP contacts are provided by residues Lys141, 178–179, Asp187, and 211–213; these read EY and RSN. Residues Asp248, Glu260, and Asn262 each contribute to the Mg(2+) site. Mn(2+) is bound by residues Asp248, Glu260, and Asn262.

This sequence belongs to the RimK family. Mg(2+) is required as a cofactor. It depends on Mn(2+) as a cofactor.

This is Probable alpha-L-glutamate ligase 1 from Shewanella amazonensis (strain ATCC BAA-1098 / SB2B).